Reading from the N-terminus, the 140-residue chain is Cytochrome b (140 aa).

The helical transmembrane segment at 38-58 (FFALHFLLPFVLAALVIMHLI) threads the bilayer. Heme b-binding residues include histidine 42 and histidine 56. Position 61 (histidine 61) interacts with a ubiquinone. The chain crosses the membrane as a helical span at residues 85–105 (FVFKDLVTIFIFFIVLSIFVF).

This sequence belongs to the cytochrome b family. In terms of assembly, fungal cytochrome b-c1 complex contains 10 subunits; 3 respiratory subunits, 2 core proteins and 5 low-molecular weight proteins. Cytochrome b-c1 complex is a homodimer. Requires heme b as cofactor.

The protein resides in the mitochondrion inner membrane. Its function is as follows. Component of the ubiquinol-cytochrome c reductase complex (complex III or cytochrome b-c1 complex) that is part of the mitochondrial respiratory chain. The b-c1 complex mediates electron transfer from ubiquinol to cytochrome c. Contributes to the generation of a proton gradient across the mitochondrial membrane that is then used for ATP synthesis. This is Cytochrome b (cob) from Aspergillus terreus.